A 275-amino-acid chain; its full sequence is Transcription factor Ovo-like 2 (275 aa).

The tract at residues 15-101 is disordered; that stretch reads SVRSWDELPD…GHLATKQRPV (87 aa). Basic and acidic residues-rich tracts occupy residues 18-29 and 39-49; these read SWDELPDEKRAD and LLHDPPEDCRS. Over residues 56 to 76 the composition is skewed to low complexity; sequence GSGSSSAGEPGGAESSSSPHA. Residues 80-89 are compositionally biased toward acidic residues; that stretch reads ETPEPGDAEG. C2H2-type zinc fingers lie at residues 119–141, 147–169, 175–198, and 214–237; these read HSCD…LKCH, HLCT…VRTH, YKCN…KKIH, and YVCE…NSAH. Serine 269 carries the phosphoserine modification.

It belongs to the krueppel C2H2-type zinc-finger protein family. In terms of assembly, interacts (via zinc-finger domains) with CEBPA (via bZIP domain); the interaction inhibits the transcription factor activity of CEBPA and is required to repress adipogenesis. In terms of tissue distribution, expressed in testis, ovary, heart and skeletal muscle. Expressed in the cornea, but absent from the corneal endothelium.

The protein localises to the nucleus. Functionally, zinc-finger transcription repressor factor. Plays a critical role in maintaining the identity of epithelial lineages by suppressing epithelial-to mesenchymal transition (EMT) mainly through the repression of ZEB1, an EMT inducer. Positively regulates neuronal differentiation. Suppresses cell cycling and terminal differentiation of keratinocytes by directly repressing MYC and NOTCH1. Important for the correct development of primordial germ cells in embryos. Plays dual functions in thermogenesis and adipogenesis to maintain energy balance. Essential for brown/beige adipose tissue-mediated thermogenesis, is necessary for the development of brown adipocytes. In white adipose tissues, limits adipogenesis by blocking CEBPA binding to its transcriptional targets and inhibiting its transcription factor activity. This chain is Transcription factor Ovo-like 2, found in Homo sapiens (Human).